Reading from the N-terminus, the 180-residue chain is Shikimate kinase (180 aa).

Position 14–19 (14–19) interacts with ATP; the sequence is GAGKST. Mg(2+) is bound at residue S18. Residues D36, R60, and G82 each coordinate substrate. R120 provides a ligand contact to ATP. Residue R140 coordinates substrate. Q157 contacts ATP.

It belongs to the shikimate kinase family. Monomer. It depends on Mg(2+) as a cofactor.

The protein resides in the cytoplasm. The enzyme catalyses shikimate + ATP = 3-phosphoshikimate + ADP + H(+). The protein operates within metabolic intermediate biosynthesis; chorismate biosynthesis; chorismate from D-erythrose 4-phosphate and phosphoenolpyruvate: step 5/7. In terms of biological role, catalyzes the specific phosphorylation of the 3-hydroxyl group of shikimic acid using ATP as a cosubstrate. This is Shikimate kinase from Haemophilus influenzae (strain PittGG).